We begin with the raw amino-acid sequence, 290 residues long: uncharacterized protein (290 aa).

This is an uncharacterized protein from Ictalurid herpesvirus 1 (strain Auburn) (IcHV-1).